Consider the following 205-residue polypeptide: Probable ADP-ribosylation factor At2g15310 (205 aa).

Gly-2 carries N-myristoyl glycine lipidation. GTP is bound by residues Gly-24 to Thr-31, Asp-67 to Gln-71, and Asn-126 to Asp-129.

Belongs to the small GTPase superfamily. Arf family.

It is found in the golgi apparatus. In terms of biological role, GTP-binding protein involved in protein trafficking; may modulate vesicle budding and uncoating within the Golgi apparatus. This Arabidopsis thaliana (Mouse-ear cress) protein is Probable ADP-ribosylation factor At2g15310.